The chain runs to 414 residues: Probable sugar-binding periplasmic protein (414 aa).

Residues 1–22 (MRKFMTTTAVAALMLAATAARA) form the signal peptide.

This sequence belongs to the bacterial solute-binding protein 1 family.

It is found in the periplasm. Part of a binding-protein-dependent transport system for a sugar. This is Probable sugar-binding periplasmic protein from Rhizobium meliloti (strain 1021) (Ensifer meliloti).